The chain runs to 326 residues: Ras association domain-containing protein 2 (326 aa).

Positions 176 to 264 (YNHKTSVFTP…SKVFLMEKDQ (89 aa)) constitute a Ras-associating domain. An SARAH domain is found at 272–319 (VAQYIKFEMPVLKSFIQKLQEEEDREVEKLMQKYTVLRLMIRQRLEEI).

In terms of assembly, interacts directly with activated KRAS in a GTP-dependent manner. Interacts (via SARAH domain) with STK3/MST2 and STK4/MST1. Post-translationally, phosphorylated by STK3/MST2 and STK4/MST1.

The protein resides in the nucleus. It localises to the cytoplasm. Its subcellular location is the chromosome. It is found in the centromere. The protein localises to the kinetochore. Its function is as follows. Potential tumor suppressor. Acts as a KRAS-specific effector protein. May promote apoptosis and cell cycle arrest. Stabilizes STK3/MST2 by protecting it from proteasomal degradation. This is Ras association domain-containing protein 2 (Rassf2) from Rattus norvegicus (Rat).